We begin with the raw amino-acid sequence, 1433 residues long: DNA-directed RNA polymerase subunit beta' (1433 aa).

Positions 60, 62, 75, and 78 each coordinate Zn(2+). Aspartate 449, aspartate 451, and aspartate 453 together coordinate Mg(2+). Zn(2+) contacts are provided by cysteine 777, cysteine 851, cysteine 858, and cysteine 861. Acidic residues-rich tracts occupy residues 1383–1393 (DSEEEEEELSE) and 1411–1433 (EEDE…DDDD). Residues 1383 to 1433 (DSEEEEEELSELSEAAPVSTATLSKLVAEEDEDEDELEEEADDSDDEDDDD) are disordered.

This sequence belongs to the RNA polymerase beta' chain family. As to quaternary structure, the RNAP catalytic core consists of 2 alpha, 1 beta, 1 beta' and 1 omega subunit. When a sigma factor is associated with the core the holoenzyme is formed, which can initiate transcription. It depends on Mg(2+) as a cofactor. Zn(2+) serves as cofactor.

The enzyme catalyses RNA(n) + a ribonucleoside 5'-triphosphate = RNA(n+1) + diphosphate. Functionally, DNA-dependent RNA polymerase catalyzes the transcription of DNA into RNA using the four ribonucleoside triphosphates as substrates. The polypeptide is DNA-directed RNA polymerase subunit beta' (Leptospira biflexa serovar Patoc (strain Patoc 1 / Ames)).